Consider the following 264-residue polypeptide: Glutamate 5-kinase (264 aa).

An ATP-binding site is contributed by Lys-15. Ser-55, Asp-142, and Asn-154 together coordinate substrate. Residues 174 to 175 (SD) and 216 to 222 (TGGIATK) contribute to the ATP site.

The protein belongs to the glutamate 5-kinase family.

The protein resides in the cytoplasm. The catalysed reaction is L-glutamate + ATP = L-glutamyl 5-phosphate + ADP. The protein operates within amino-acid biosynthesis; L-proline biosynthesis; L-glutamate 5-semialdehyde from L-glutamate: step 1/2. In terms of biological role, catalyzes the transfer of a phosphate group to glutamate to form L-glutamate 5-phosphate. The chain is Glutamate 5-kinase from Alkaliphilus metalliredigens (strain QYMF).